A 599-amino-acid chain; its full sequence is Zinc finger BED domain-containing protein 3 (599 aa).

Residues L70–G104 form a disordered region. Residues G72–P81 show a composition bias toward gly residues. The BED-type zinc-finger motif lies at V123–V176. Residues C144, C147, H164, and H169 each contribute to the Zn(2+) site. Disordered stretches follow at residues G208 to N283 and A440 to D491. Low complexity-rich tracts occupy residues S223–S246 and S268–N283. Residues A440–A455 are compositionally biased toward polar residues. The span at G460 to T483 shows a compositional bias: acidic residues.

Expressed in neuronal cell bodies in the ventral cord and HSN neurons.

The protein localises to the nucleus. Its function is as follows. Probable transcription factor. Involved in vulval organogenesis. During vulval development, may play a role in the regulation of cell cycle regulators such as cul-1. Positively modulates expression of homeobox protein lin-39, perhaps by binding to regulatory regions of the lin-39 gene, acting in the vulval lineage. Plays a role in larval molting. The sequence is that of Zinc finger BED domain-containing protein 3 from Caenorhabditis elegans.